A 102-amino-acid polypeptide reads, in one-letter code: Small ribosomal subunit protein bS6 (102 aa).

The protein belongs to the bacterial ribosomal protein bS6 family.

Binds together with bS18 to 16S ribosomal RNA. The sequence is that of Small ribosomal subunit protein bS6 from Deinococcus geothermalis (strain DSM 11300 / CIP 105573 / AG-3a).